A 214-amino-acid chain; its full sequence is Adenylate kinase (214 aa).

10–15 (GAGKGT) contributes to the ATP binding site. The NMP stretch occupies residues 30 to 59 (STGDMLRSAVKAGTELGLKAKALMDHGKLV). AMP contacts are provided by residues Thr-31, Arg-36, 57–59 (KLV), 85–88 (GFPR), and Gln-92. The interval 122–159 (GRRIHAPSGRVYHIKFNPPVVENKDDVTGEELTVRKDD) is LID. Residues Arg-123 and 132–133 (VY) each bind ATP. 2 residues coordinate AMP: Arg-156 and Arg-167. An ATP-binding site is contributed by Arg-200.

This sequence belongs to the adenylate kinase family. In terms of assembly, monomer.

It is found in the cytoplasm. The catalysed reaction is AMP + ATP = 2 ADP. It participates in purine metabolism; AMP biosynthesis via salvage pathway; AMP from ADP: step 1/1. In terms of biological role, catalyzes the reversible transfer of the terminal phosphate group between ATP and AMP. Plays an important role in cellular energy homeostasis and in adenine nucleotide metabolism. This is Adenylate kinase from Photorhabdus laumondii subsp. laumondii (strain DSM 15139 / CIP 105565 / TT01) (Photorhabdus luminescens subsp. laumondii).